Here is an 87-residue protein sequence, read N- to C-terminus: Phospholemman (87 aa).

An N-terminal signal peptide occupies residues 1-20 (MASLSHILVLWVGILTVVNA). The Extracellular portion of the chain corresponds to 21–35 (EAPQEHDPFTYDYQS). Residues 36-56 (LRIGGLIIAGILFILGILIVL) traverse the membrane as a helical segment. Residues 57–87 (SRRCRCKFNQQQSLGKMRSPHLAAQFSSESC) are Cytoplasmic-facing. Cysteine 60 is lipidated: S-palmitoyl cysteine. Cysteine 62 bears the S-glutathionyl cysteine; alternate mark. Residue cysteine 62 is the site of S-palmitoyl cysteine; alternate attachment. Serine 75 is subject to Phosphoserine; by PKA and PKC. Serine 83 bears the Phosphoserine; by PKA mark.

Belongs to the FXYD family. As to quaternary structure, homotetramer. Monomer. Regulatory subunit of the sodium/potassium-transporting ATPase (NKA) which is composed of a catalytic alpha subunit, a non-catalytic beta subunit and an additional regulatory subunit. The monomeric form associates with NKA while the oligomeric form does not. Interacts with the catalytic alpha-1 subunit ATP1A1. Also interacts with the catalytic alpha-2 and alpha-3 subunits ATP1A2 and ATP1A3. Very little interaction with ATP1A1, ATP1A2 or ATP1A3 when phosphorylated at Ser-83. Interacts with the non-catalytic beta-1 subunit ATP1B1. Oxidative stress decreases interaction with ATP1A1 but increases interaction with ATP1B1. Major plasma membrane substrate for cAMP-dependent protein kinase (PKA) and protein kinase C (PKC) in several different tissues. Phosphorylated in response to insulin and adrenergic stimulation. Phosphorylation at Ser-83 stimulates sodium/potassium-transporting ATPase activity while the unphosphorylated form inhibits sodium/potassium-transporting ATPase activity. Phosphorylation increases tetramerization, decreases binding to ATP1A1 and reduces inhibition of ATP1A1 activity. Phosphorylation at Ser-75 leads to greatly reduced interaction with ATP1A1, ATP1A2 and ATP1A3. May be phosphorylated by DMPK. In terms of processing, palmitoylation increases half-life and stability and is enhanced upon phosphorylation at Ser-83 by PKA.

Its subcellular location is the cell membrane. The protein resides in the sarcolemma. It is found in the apical cell membrane. It localises to the membrane. The protein localises to the caveola. Its subcellular location is the T-tubule. Its function is as follows. Associates with and regulates the activity of the sodium/potassium-transporting ATPase (NKA) which transports Na(+) out of the cell and K(+) into the cell. Inhibits NKA activity in its unphosphorylated state and stimulates activity when phosphorylated. Reduces glutathionylation of the NKA beta-1 subunit ATP1B1, thus reversing glutathionylation-mediated inhibition of ATP1B1. Contributes to female sexual development by maintaining the excitability of neurons which secrete gonadotropin-releasing hormone. This is Phospholemman from Sus scrofa (Pig).